A 660-amino-acid polypeptide reads, in one-letter code: Acetyl-coenzyme A synthetase (660 aa).

CoA contacts are provided by residues 197–200 (RGGK) and Thr-317. ATP-binding positions include 397–399 (GEP), 421–426 (DTFWQT), Asp-512, and Arg-528. Ser-536 serves as a coordination point for CoA. Arg-539 lines the ATP pocket. Residues Val-550 and Val-555 each contribute to the Mg(2+) site. An N6-acetyllysine modification is found at Lys-625.

This sequence belongs to the ATP-dependent AMP-binding enzyme family. Mg(2+) is required as a cofactor. Acetylated. Deacetylation by the SIR2-homolog deacetylase activates the enzyme.

It catalyses the reaction acetate + ATP + CoA = acetyl-CoA + AMP + diphosphate. Catalyzes the conversion of acetate into acetyl-CoA (AcCoA), an essential intermediate at the junction of anabolic and catabolic pathways. AcsA undergoes a two-step reaction. In the first half reaction, AcsA combines acetate with ATP to form acetyl-adenylate (AcAMP) intermediate. In the second half reaction, it can then transfer the acetyl group from AcAMP to the sulfhydryl group of CoA, forming the product AcCoA. This is Acetyl-coenzyme A synthetase from Cupriavidus taiwanensis (strain DSM 17343 / BCRC 17206 / CCUG 44338 / CIP 107171 / LMG 19424 / R1) (Ralstonia taiwanensis (strain LMG 19424)).